A 428-amino-acid polypeptide reads, in one-letter code: Bifunctional IPC transferase and DIPP synthase (428 aa).

The tract at residues 2–227 is mobA-like NTP transferase; that stretch reads VETAVILAGG…KAKKYLVKTA (226 aa). Residues 8-10, Lys-25, Glu-80, and Glu-116 each bind CTP; that span reads LAG. Glu-116 is a binding site for Mg(2+). The tract at residues 228–425 is CDP-alcohol phosphatidyltransferases; it reads IKGVGDGFIS…LTIYLVWKKK (198 aa). 3 helical membrane passes run 266-286, 336-356, and 389-409; these read FLLGMFSALVAYFSPALGGIL, PSWDFMPWVFAALFGSVMVSY, and MIMIFTILGWIKALFVVLAII.

The protein in the N-terminal section; belongs to the MobA family. It in the C-terminal section; belongs to the CDP-alcohol phosphatidyltransferase class-I family. Mg(2+) is required as a cofactor.

It localises to the membrane. It carries out the reaction 1D-myo-inositol 3-phosphate + CTP + H(+) = CDP-1L-myo-inositol + diphosphate. The enzyme catalyses CDP-1L-myo-inositol + 1D-myo-inositol 3-phosphate = bis(1L-myo-inositol) 3,1'-phosphate 1-phosphate + CMP + H(+). Its function is as follows. Involved in biosynthesis of di-myo-inositol phosphate (DIP), a widespread organic solute in microorganisms adapted to hot environments. Catalyzes the condensation of CTP and L-myo-inositol-1-phosphate into CDP-L-myo-inositol, as well as the biosynthesis of di-myo-inositol-1,3'-phosphate-1'-phosphate (DIPP) from CDP-L-myo-inositol and L-myo-inositol-1-phosphate. This is Bifunctional IPC transferase and DIPP synthase (spsI) from Aquifex aeolicus (strain VF5).